A 206-amino-acid chain; its full sequence is Ribonuclease HII (206 aa).

One can recognise an RNase H type-2 domain in the interval 1 to 206; the sequence is MKVLGIDEAG…SWATVQKKKQ (206 aa). A divalent metal cation contacts are provided by aspartate 7, glutamate 8, and aspartate 105.

The protein belongs to the RNase HII family. Requires Mn(2+) as cofactor. It depends on Mg(2+) as a cofactor.

It is found in the cytoplasm. The enzyme catalyses Endonucleolytic cleavage to 5'-phosphomonoester.. Its function is as follows. Endonuclease that specifically degrades the RNA of RNA-DNA hybrids. This is Ribonuclease HII (rnhB) from Methanothermobacter thermautotrophicus (strain ATCC 29096 / DSM 1053 / JCM 10044 / NBRC 100330 / Delta H) (Methanobacterium thermoautotrophicum).